Reading from the N-terminus, the 363-residue chain is uncharacterized protein (363 aa).

29-36 lines the ATP pocket; it reads GSINSGKT.

The protein belongs to the archaeal ATPase family.

This is an uncharacterized protein from Methanocaldococcus jannaschii (strain ATCC 43067 / DSM 2661 / JAL-1 / JCM 10045 / NBRC 100440) (Methanococcus jannaschii).